Here is a 569-residue protein sequence, read N- to C-terminus: Pyruvate decarboxylase (569 aa).

Pyruvate-binding residues include D38 and H124. Thiamine diphosphate contacts are provided by residues T398 and 421-423 (GSI). D451 serves as a coordination point for Mg(2+). Residues 452–453 (GS) and 478–483 (NEGYTI) each bind thiamine diphosphate. N478 and G480 together coordinate Mg(2+). Pyruvate is bound at residue E484.

It belongs to the TPP enzyme family. In terms of assembly, homotetramer. Mg(2+) is required as a cofactor. The cofactor is thiamine diphosphate.

The enzyme catalyses a 2-oxocarboxylate + H(+) = an aldehyde + CO2. It carries out the reaction pyruvate + H(+) = acetaldehyde + CO2. This chain is Pyruvate decarboxylase (pdcA), found in Aspergillus fumigatus (strain ATCC MYA-4609 / CBS 101355 / FGSC A1100 / Af293) (Neosartorya fumigata).